Consider the following 352-residue polypeptide: Molybdenum import ATP-binding protein ModC (352 aa).

One can recognise an ABC transporter domain in the interval 1 to 229 (MLELNFSQTL…SVMNPWLPKE (229 aa)). 31–38 (GVSGAGKT) is a binding site for ATP. A Mop domain is found at 289-352 (QTSIRNVLRA…AQIKSVSITA (64 aa)).

The protein belongs to the ABC transporter superfamily. Molybdate importer (TC 3.A.1.8) family. The complex is composed of two ATP-binding proteins (ModC), two transmembrane proteins (ModB) and a solute-binding protein (ModA).

Its subcellular location is the cell inner membrane. The enzyme catalyses molybdate(out) + ATP + H2O = molybdate(in) + ADP + phosphate + H(+). Its function is as follows. Part of the ABC transporter complex ModABC involved in molybdenum import. Responsible for energy coupling to the transport system. The polypeptide is Molybdenum import ATP-binding protein ModC (Shigella flexneri).